A 1663-amino-acid chain; its full sequence is Complement C3 (1663 aa).

The first 24 residues, 1-24 (MGPASGSQLLVLLLLLASSPLALG), serve as a signal peptide directing secretion. Ser40 is subject to Phosphoserine. Cystine bridges form between Cys559–Cys816, Cys626–Cys661, Cys693–Cys720, Cys694–Cys727, Cys707–Cys728, Cys873–Cys1513, Cys1101–Cys1158, Cys1358–Cys1489, Cys1389–Cys1458, Cys1506–Cys1511, Cys1518–Cys1590, Cys1537–Cys1661, and Cys1637–Cys1646. Ser671 carries the phosphoserine modification. Residues 693-728 (CCEDGMRDIPMRYSCQRRARLITQGENCIKAFIDCC) enclose the Anaphylatoxin-like domain. N-linked (GlcNAc...) asparagine glycosylation is present at Asn939. A Phosphoserine modification is found at Ser968. Positions 1010–1013 (CGEQ) form a cross-link, isoglutamyl cysteine thioester (Cys-Gln). The residue at position 1321 (Ser1321) is a Phosphoserine. Residues 1518–1661 (CFMQQSQEKI…FTESMVVYGC (144 aa)) form the NTR domain. Ser1573 carries the post-translational modification Phosphoserine. Residue Asn1617 is glycosylated (N-linked (GlcNAc...) asparagine). The interval 1634 to 1659 (AEECQDQKYQKQCEELGAFTESMVVY) is interaction with CFP/properdin.

In absence of complement activation, the C3 precursor is first processed by the removal of 4 Arg residues, forming two chains, beta and alpha, linked by a disulfide bond. As to quaternary structure, complement C3b is composed of complement C3b and complement C3 beta chains that are associated via disulfide bonds. Non-enzymatic component of the C5 convertase, also named C4bC2bC3b, composed of the serine protease complement C2b (C2), complement C3b, as well as complement C4b (C4). Non-enzymatic component of the C5 convertase of the alternative complement pathways composed of the serine protease complement CFB and complement C3b. Interacts with CFP; interaction takes place together with CFB in the alternative complement system and allows the complex to become active. Interacts with CR1 (via Sushi 8 and Sushi 9 domains). Interacts with CFH. In terms of assembly, interacts with CFH. Interacts with CR2. During pregnancy, C3dg exists as a complex (probably a 2:2:2 heterohexamer) with AGT and the proform of PRG2. Interacts with CR2 (via the N-terminal Sushi domains 1 and 2). In terms of processing, C3 precursor is first processed by the removal of 4 Arg residues, forming two chains, beta and alpha, linked by a disulfide bond. During activation of the complement systems, the alpha chain is cleaved into C3a and C3b by the C3 convertase: C3b stays linked to the beta chain, while C3a is released in the plasma. The alpha chain is cleaved by the serine protease complement C2b component of the C3 convertase to generate C3a and C3b following activation by the classical, lectin and GZMK complement systems. The alpha chain is cleaved by CFB component of the C3 convertase to generate C3a and C3b following activation by the alternative complement system. Post-translationally, C3a is further processed by carboxypeptidases to release the C-terminal arginine residue generating the acylation stimulating protein (ASP). Levels of ASP are increased in adipocytes in the postprandial period and by insulin and dietary chylomicrons. Complement C3b is rapidly split in two positions by factor I (CFI) and a cofactor (CFH) to form iC3b (inactivated C3b) and C3f which is released. CFI and CFH catalyze proteolytic degradation of already-deposited complement C3b. Then iC3b is slowly cleaved (possibly by CFI) to form C3c (beta chain + alpha' chain fragment 1 + alpha' chain fragment 2), C3dg and C3f. Other proteases produce other fragments such as C3d or C3g. In terms of processing, upon activation, the internal thioester bond reacts with carbohydrate antigens on the target surface to form amide or ester bonds, leading to covalent association with the surface of pathogens. Post-translationally, complement C3b interacts with complement C4b via a thioester linkage. Phosphorylated by FAM20C in the extracellular medium.

It localises to the secreted. It is found in the cell surface. Complement activation is inhibited by VSIG4. In terms of biological role, precursor of non-enzymatic components of the classical, alternative, lectin and GZMK complement pathways, which consist in a cascade of proteins that leads to phagocytosis and breakdown of pathogens and signaling that strengthens the adaptive immune system. Its function is as follows. Non-enzymatic component of C5 convertase. Generated following cleavage by C3 convertase, it covalently attaches to the surface of pathogens, where it acts as an opsonin that marks the surface of antigens for removal. Complement C3b binds covalently via its reactive thioester, to cell surface carbohydrates or immune aggregates. Together with complement C4b, it then recruits the serine protease complement C2b to form the C5 convertase, which cleaves and activate C5, the next component of the complement pathways. In the alternative complement pathway, recruits the serine protease CFB to form the C5 convertase that cleaves and activates C5. Functionally, mediator of local inflammatory process released following cleavage by C3 convertase. Acts by binding to its receptor, C3AR1, activating G protein-coupled receptor signaling, promoting the phosphorylation, ARRB2-mediated internalization and endocytosis of C3AR1. C3a anaphylatoxin stimulates the activation of immune cells such as mast cells and basophilic leukocytes to release inflammation agents, such as cytokines, chemokines and histamine, which promote inflammation development. Also acts as potent chemoattractant for the migration of macrophages and neutrophils to the inflamed tissues, resulting in neutralization of the inflammatory triggers by multiple ways, such as phagocytosis and generation of reactive oxidants. Adipogenic hormone that stimulates triglyceride synthesis and glucose transport in adipocytes, regulating fat storage and playing a role in postprandial triglyceride clearance. Appears to stimulate triglyceride synthesis via activation of the PLC, MAPK and AKT signaling pathways. Acts by binding to its receptor, C5AR2, activating G protein-coupled receptor signaling, promoting the phosphorylation, ARRB2-mediated internalization and endocytosis of C5AR2. In terms of biological role, acts as a chemoattractant for neutrophils in chronic inflammation. This Mus musculus (Mouse) protein is Complement C3.